Here is a 131-residue protein sequence, read N- to C-terminus: Sulfurtransferase TusD (131 aa).

Cysteine 81 functions as the Cysteine persulfide intermediate in the catalytic mechanism.

The protein belongs to the DsrE/TusD family. As to quaternary structure, heterohexamer, formed by a dimer of trimers. The hexameric TusBCD complex contains 2 copies each of TusB, TusC and TusD. The TusBCD complex interacts with TusE.

Its subcellular location is the cytoplasm. Part of a sulfur-relay system required for 2-thiolation of 5-methylaminomethyl-2-thiouridine (mnm(5)s(2)U) at tRNA wobble positions. Accepts sulfur from TusA and transfers it in turn to TusE. The sequence is that of Sulfurtransferase TusD from Photorhabdus laumondii subsp. laumondii (strain DSM 15139 / CIP 105565 / TT01) (Photorhabdus luminescens subsp. laumondii).